A 415-amino-acid polypeptide reads, in one-letter code: 3-isopropylmalate dehydratase large subunit (415 aa).

Residues cysteine 297, cysteine 355, and cysteine 358 each coordinate [4Fe-4S] cluster.

It belongs to the aconitase/IPM isomerase family. LeuC type 2 subfamily. Heterodimer of LeuC and LeuD. It depends on [4Fe-4S] cluster as a cofactor.

It carries out the reaction (2R,3S)-3-isopropylmalate = (2S)-2-isopropylmalate. The protein operates within amino-acid biosynthesis; L-leucine biosynthesis; L-leucine from 3-methyl-2-oxobutanoate: step 2/4. Catalyzes the isomerization between 2-isopropylmalate and 3-isopropylmalate, via the formation of 2-isopropylmaleate. This Sulfurisphaera tokodaii (strain DSM 16993 / JCM 10545 / NBRC 100140 / 7) (Sulfolobus tokodaii) protein is 3-isopropylmalate dehydratase large subunit.